The following is a 227-amino-acid chain: Lipoprotein-releasing system ATP-binding protein LolD (227 aa).

An ABC transporter domain is found at 6–227; it reads LEMRGITKSY…RLDAGQLSDV (222 aa). An ATP-binding site is contributed by 43-50; it reads APSGAGKS.

The protein belongs to the ABC transporter superfamily. Lipoprotein translocase (TC 3.A.1.125) family. In terms of assembly, the complex is composed of two ATP-binding proteins (LolD) and two transmembrane proteins (LolC and LolE).

The protein resides in the cell inner membrane. Its function is as follows. Part of the ABC transporter complex LolCDE involved in the translocation of mature outer membrane-directed lipoproteins, from the inner membrane to the periplasmic chaperone, LolA. Responsible for the formation of the LolA-lipoprotein complex in an ATP-dependent manner. This Roseobacter denitrificans (strain ATCC 33942 / OCh 114) (Erythrobacter sp. (strain OCh 114)) protein is Lipoprotein-releasing system ATP-binding protein LolD.